A 427-amino-acid polypeptide reads, in one-letter code: Trigger factor (427 aa).

The region spanning 163–248 is the PPIase FKBP-type domain; that stretch reads GDTVVIDFVG…IHEVKTKEVP (86 aa).

Belongs to the FKBP-type PPIase family. Tig subfamily.

It localises to the cytoplasm. It carries out the reaction [protein]-peptidylproline (omega=180) = [protein]-peptidylproline (omega=0). Functionally, involved in protein export. Acts as a chaperone by maintaining the newly synthesized protein in an open conformation. Functions as a peptidyl-prolyl cis-trans isomerase. The chain is Trigger factor from Streptococcus pyogenes serotype M49 (strain NZ131).